A 178-amino-acid polypeptide reads, in one-letter code: ATP synthase subunit delta (178 aa).

It belongs to the ATPase delta chain family. In terms of assembly, F-type ATPases have 2 components, F(1) - the catalytic core - and F(0) - the membrane proton channel. F(1) has five subunits: alpha(3), beta(3), gamma(1), delta(1), epsilon(1). F(0) has three main subunits: a(1), b(2) and c(10-14). The alpha and beta chains form an alternating ring which encloses part of the gamma chain. F(1) is attached to F(0) by a central stalk formed by the gamma and epsilon chains, while a peripheral stalk is formed by the delta and b chains.

It is found in the cell membrane. Functionally, f(1)F(0) ATP synthase produces ATP from ADP in the presence of a proton or sodium gradient. F-type ATPases consist of two structural domains, F(1) containing the extramembraneous catalytic core and F(0) containing the membrane proton channel, linked together by a central stalk and a peripheral stalk. During catalysis, ATP synthesis in the catalytic domain of F(1) is coupled via a rotary mechanism of the central stalk subunits to proton translocation. Its function is as follows. This protein is part of the stalk that links CF(0) to CF(1). It either transmits conformational changes from CF(0) to CF(1) or is implicated in proton conduction. The polypeptide is ATP synthase subunit delta (Streptococcus gordonii (strain Challis / ATCC 35105 / BCRC 15272 / CH1 / DL1 / V288)).